The sequence spans 310 residues: Porphobilinogen deaminase (310 aa).

Cys-242 carries the S-(dipyrrolylmethanemethyl)cysteine modification.

The protein belongs to the HMBS family. In terms of assembly, monomer. Requires dipyrromethane as cofactor.

It catalyses the reaction 4 porphobilinogen + H2O = hydroxymethylbilane + 4 NH4(+). It functions in the pathway porphyrin-containing compound metabolism; protoporphyrin-IX biosynthesis; coproporphyrinogen-III from 5-aminolevulinate: step 2/4. In terms of biological role, tetrapolymerization of the monopyrrole PBG into the hydroxymethylbilane pre-uroporphyrinogen in several discrete steps. In Alcanivorax borkumensis (strain ATCC 700651 / DSM 11573 / NCIMB 13689 / SK2), this protein is Porphobilinogen deaminase.